A 130-amino-acid polypeptide reads, in one-letter code: UPF0225 protein DR_0483 (130 aa).

It belongs to the UPF0225 family.

In Deinococcus radiodurans (strain ATCC 13939 / DSM 20539 / JCM 16871 / CCUG 27074 / LMG 4051 / NBRC 15346 / NCIMB 9279 / VKM B-1422 / R1), this protein is UPF0225 protein DR_0483.